The sequence spans 353 residues: MHKRPLSILLRPLGLLYGLIAEIRNTLFETALLTPWRPPCPVVSIGNITAGGTGKTPMVDWTTKYFLSLGCRVAIISRGYGRLTKGVQMVSDGRHLLLSAREAGDETAMLAANNPEAIVVAAEKRKEGARFIQKTFENFPPDVIILDDAFQHRQMARDLDIVIVSASEPFFKARMLPEGRLREPLRNLARADIILLGKITDPDEADAIEHALTATGRPVLRTRVHTLGLEPVTDCSEESANTGVQLQALAFAGIAAPEEFLASLRRTGTDVRAHRFFRDHQPYTTETVRSLIREAKEKGLSLVTTEKDWFRLLGDPQLKELMEHAGCSYLKIETRLPEGEEKLRMALRDLVGR.

An ATP-binding site is contributed by 49-56 (TAGGTGKT).

This sequence belongs to the LpxK family.

It carries out the reaction a lipid A disaccharide + ATP = a lipid IVA + ADP + H(+). Its pathway is glycolipid biosynthesis; lipid IV(A) biosynthesis; lipid IV(A) from (3R)-3-hydroxytetradecanoyl-[acyl-carrier-protein] and UDP-N-acetyl-alpha-D-glucosamine: step 6/6. Its function is as follows. Transfers the gamma-phosphate of ATP to the 4'-position of a tetraacyldisaccharide 1-phosphate intermediate (termed DS-1-P) to form tetraacyldisaccharide 1,4'-bis-phosphate (lipid IVA). This chain is Tetraacyldisaccharide 4'-kinase, found in Chlorobium phaeovibrioides (strain DSM 265 / 1930) (Prosthecochloris vibrioformis (strain DSM 265)).